The following is a 407-amino-acid chain: Membrane protein MosC (407 aa).

Residues 1–24 (MTRTSPRHHAPSETKRRVPMGGVH) form a disordered region. 11 consecutive transmembrane segments (helical) span residues 31–51 (LTITAVAFQFFINGLVLAAWA), 69–89 (GVLLLIMAAGALLFMSLAGYF), 109–129 (ALVLIFAAPNCMTFLCSIVLF), 157–177 (AFLHGCSSTGILAGIMTFGVI), 186–206 (SVTLLTGILIVARWLFPHLLD), 225–245 (LLMFGILSFLTMVTDGAIAEW), 255–275 (QVTDQVGSLGYVAFTLLMIAG), 290–310 (ALIAISGSLASAGMTTALFMP), 316–336 (LAGFALLGLGMANLVPIIFSE), 347–367 (VGLTFVSVCGYSGFLVGPPII), and 377–397 (GRALLFIIAVGVIVACASVFF).

Its subcellular location is the cell membrane. In terms of biological role, may be a membrane transport protein that could either transport a precursor for rhizopine biosynthesis into bacteroids or the finished product from the bacteroids. This Rhizobium meliloti (Ensifer meliloti) protein is Membrane protein MosC (mosC).